The primary structure comprises 131 residues: Fluoride-specific ion channel FluC 2 (131 aa).

Helical transmembrane passes span 5-25 (SAVF…NLWI), 35-55 (WLEN…FMIG), 59-79 (PLLS…MSTF), and 95-115 (LLYV…GVFV). Na(+) contacts are provided by glycine 71 and threonine 74.

This sequence belongs to the fluoride channel Fluc/FEX (TC 1.A.43) family.

It is found in the cell membrane. It carries out the reaction fluoride(in) = fluoride(out). With respect to regulation, na(+) is not transported, but it plays an essential structural role and its presence is essential for fluoride channel function. Fluoride-specific ion channel. Important for reducing fluoride concentration in the cell, thus reducing its toxicity. The sequence is that of Fluoride-specific ion channel FluC 2 from Bacillus subtilis (strain 168).